We begin with the raw amino-acid sequence, 568 residues long: DNA ligase 2 (568 aa).

Residue Glu254 participates in ATP binding. Catalysis depends on Lys256, which acts as the N6-AMP-lysine intermediate. The ATP site is built by Arg261, Arg276, Glu306, Phe346, Arg425, and Lys431.

It belongs to the ATP-dependent DNA ligase family. Mg(2+) serves as cofactor.

The catalysed reaction is ATP + (deoxyribonucleotide)n-3'-hydroxyl + 5'-phospho-(deoxyribonucleotide)m = (deoxyribonucleotide)n+m + AMP + diphosphate.. In terms of biological role, DNA ligase that seals nicks in double-stranded DNA during DNA replication, DNA recombination and DNA repair. This chain is DNA ligase 2, found in Methanosarcina acetivorans (strain ATCC 35395 / DSM 2834 / JCM 12185 / C2A).